The sequence spans 501 residues: Type II methyltransferase M.BsuBI (501 aa).

It belongs to the N(4)/N(6)-methyltransferase family.

It carries out the reaction a 2'-deoxyadenosine in DNA + S-adenosyl-L-methionine = an N(6)-methyl-2'-deoxyadenosine in DNA + S-adenosyl-L-homocysteine + H(+). A beta subtype methylase that recognizes the double-stranded sequence 5'-CTGCAG-3', methylates A-5 on both strands, and protects the DNA from cleavage by the BsuBI endonuclease. This chain is Type II methyltransferase M.BsuBI (hsdBM), found in Bacillus subtilis.